A 749-amino-acid polypeptide reads, in one-letter code: MGDVLSTHLDDARRQHIAEKTEKILTEFLRFYEDQYGVSLFNSMRHEIEGTGPPQAQLLWRKVPLDERIIFSGNLFQYQEDNKKWRNRFSLVPHNYGLVLYENKVAYERQIPPRAVINSAGYKVLTSVDQYLELVGNSLPGTTSKSGSTPILKCPTQFPLILWHPYARHYYFCMMTEAEQDKWQAVLQDCVRHCNNGIPENSKVEGPAFTDAIRMYRQSKEQYGTWEMLCGNEVQILSNLVMEELGPALKAELGPRLKGKPQERQRQWIQISDAVYRLVFEQAKVHFEDVLCKLQRARPAMEAVIRTDMDQIITSKEHLASKIRAFILPKAEVCVRNHVQPYIPSILEALMVPTSQGFTEVRDVFFKEVTDMNLNVINEGGIDKLGEYMEKLSQLAYHPLKMQSCYEKMEPLRLDGLQQRFDVSSTSVFKQRAQIHMREQMDNAVYTFETLLHQELGKGPTKEELCKSIQRILERVLKKYDYDSSSVRKRFFREALLQITIPFLLKKLAPTCKSELPRFQELIFEDFARFILVENTYEEVVLQTVMKDILQAVKEAAVQRKHNLYRDSMVLHNSDPNLHLLAEGTPIDWGEQYGDSGDSGGGDSGGSPCPSEAATLTEKRRRAKQVMSVVQDEESGLPFEAGVEPPSPASPDSVTELRGLLAQDLQAESSPPASPLLNGAPVQESSQPVAVPEASPPASPLRHLPPGKAVDLEPPKPSDQETGEQVSSPGSRPPIHTTTEDSAGVQTEF.

Gly2 is lipidated: N-myristoyl glycine. One can recognise a PH domain in the interval 68 to 192; that stretch reads RIIFSGNLFQ…WQAVLQDCVR (125 aa). Residues Ser568, Ser574, Ser607, Ser628, Ser647, Ser650, Ser669, Ser674, Ser685, Ser695, and Ser699 each carry the phosphoserine modification. Residues 589–749 are disordered; sequence WGEQYGDSGD…EDSAGVQTEF (161 aa). Over residues 710–719 the composition is skewed to basic and acidic residues; sequence VDLEPPKPSD. Residues 723 to 749 are compositionally biased toward polar residues; that stretch reads GEQVSSPGSRPPIHTTTEDSAGVQTEF.

This sequence belongs to the Niban family. In terms of processing, as apoptosis proceeds, degraded via an proteasome-independent pathway, probably by caspases.

It is found in the cytoplasm. It localises to the cytosol. The protein localises to the cell junction. The protein resides in the adherens junction. Its subcellular location is the membrane. In terms of biological role, may play a role in apoptosis suppression. The protein is Protein Niban 2 of Mus musculus (Mouse).